Here is a 514-residue protein sequence, read N- to C-terminus: Peptide chain release factor 3 (514 aa).

Residues 8–268 (KKRRTFAIIS…IFLKFAPEPH (261 aa)) enclose the tr-type G domain. GTP is bound by residues 17 to 24 (SHPDAGKT), 85 to 89 (DTPGH), and 139 to 142 (NKLD).

Belongs to the TRAFAC class translation factor GTPase superfamily. Classic translation factor GTPase family. PrfC subfamily.

The protein localises to the cytoplasm. Functionally, increases the formation of ribosomal termination complexes and stimulates activities of RF-1 and RF-2. It binds guanine nucleotides and has strong preference for UGA stop codons. It may interact directly with the ribosome. The stimulation of RF-1 and RF-2 is significantly reduced by GTP and GDP, but not by GMP. This Streptococcus pneumoniae (strain 70585) protein is Peptide chain release factor 3.